The primary structure comprises 492 residues: Bifunctional purine biosynthesis protein PurH (492 aa).

The 144-residue stretch at 1–144 (MKKAILSVSN…KNYKHVTTIV (144 aa)) folds into the MGS-like domain.

It belongs to the PurH family.

It carries out the reaction (6R)-10-formyltetrahydrofolate + 5-amino-1-(5-phospho-beta-D-ribosyl)imidazole-4-carboxamide = 5-formamido-1-(5-phospho-D-ribosyl)imidazole-4-carboxamide + (6S)-5,6,7,8-tetrahydrofolate. The enzyme catalyses IMP + H2O = 5-formamido-1-(5-phospho-D-ribosyl)imidazole-4-carboxamide. Its pathway is purine metabolism; IMP biosynthesis via de novo pathway; 5-formamido-1-(5-phospho-D-ribosyl)imidazole-4-carboxamide from 5-amino-1-(5-phospho-D-ribosyl)imidazole-4-carboxamide (10-formyl THF route): step 1/1. The protein operates within purine metabolism; IMP biosynthesis via de novo pathway; IMP from 5-formamido-1-(5-phospho-D-ribosyl)imidazole-4-carboxamide: step 1/1. The chain is Bifunctional purine biosynthesis protein PurH from Staphylococcus aureus (strain MSSA476).